Here is a 256-residue protein sequence, read N- to C-terminus: Tetraspanin-32 (256 aa).

The next 4 membrane-spanning stretches (helical) occupy residues 15–35, 61–81, 90–110, and 203–223; these read LITN…VVVI, AFYV…LSTI, LMAA…QVAF, and CTSL…WFAI.

The protein belongs to the tetraspanin (TM4SF) family. In terms of tissue distribution, expressed exclusively in hematopoietic tissues. Expression detected in spleen, thymus, bone marrow and peripheral blood leukocytes but not in heart, brain, lung, liver, kidney or testis.

It is found in the membrane. This chain is Tetraspanin-32 (Tspan32), found in Mus musculus (Mouse).